The sequence spans 117 residues: Large ribosomal subunit protein bL20 (117 aa).

The protein belongs to the bacterial ribosomal protein bL20 family.

Functionally, binds directly to 23S ribosomal RNA and is necessary for the in vitro assembly process of the 50S ribosomal subunit. It is not involved in the protein synthesizing functions of that subunit. The polypeptide is Large ribosomal subunit protein bL20 (Solidesulfovibrio magneticus (strain ATCC 700980 / DSM 13731 / RS-1) (Desulfovibrio magneticus)).